We begin with the raw amino-acid sequence, 382 residues long: Dual-specificity RNA methyltransferase RlmN (382 aa).

The active-site Proton acceptor is Glu-94. The Radical SAM core domain maps to Glu-100–Asp-336. Cysteines 107 and 342 form a disulfide. [4Fe-4S] cluster-binding residues include Cys-114, Cys-118, and Cys-121. S-adenosyl-L-methionine-binding positions include Gly-168 to Glu-169, Ser-200, Ser-222 to His-224, and Asn-299. Catalysis depends on Cys-342, which acts as the S-methylcysteine intermediate.

The protein belongs to the radical SAM superfamily. RlmN family. [4Fe-4S] cluster serves as cofactor.

The protein localises to the cytoplasm. The catalysed reaction is adenosine(2503) in 23S rRNA + 2 reduced [2Fe-2S]-[ferredoxin] + 2 S-adenosyl-L-methionine = 2-methyladenosine(2503) in 23S rRNA + 5'-deoxyadenosine + L-methionine + 2 oxidized [2Fe-2S]-[ferredoxin] + S-adenosyl-L-homocysteine. It catalyses the reaction adenosine(37) in tRNA + 2 reduced [2Fe-2S]-[ferredoxin] + 2 S-adenosyl-L-methionine = 2-methyladenosine(37) in tRNA + 5'-deoxyadenosine + L-methionine + 2 oxidized [2Fe-2S]-[ferredoxin] + S-adenosyl-L-homocysteine. Functionally, specifically methylates position 2 of adenine 2503 in 23S rRNA and position 2 of adenine 37 in tRNAs. m2A2503 modification seems to play a crucial role in the proofreading step occurring at the peptidyl transferase center and thus would serve to optimize ribosomal fidelity. This chain is Dual-specificity RNA methyltransferase RlmN, found in Legionella pneumophila (strain Lens).